The chain runs to 314 residues: Epithelial cell adhesion molecule (314 aa).

An N-terminal signal peptide occupies residues 1–23; the sequence is MAPPQVLAFGLLLAAATAAVAAA. The Extracellular portion of the chain corresponds to 24–265; that stretch reads QQGCVCENYK…PPEFSMQGLQ (242 aa). 6 cysteine pairs are disulfide-bonded: C27-C46, C29-C59, C38-C48, C66-C99, C110-C116, and C118-C135. N37 carries N-linked (GlcNAc...) asparagine glycosylation. The Thyroglobulin type-1 domain maps to 63–135; that stretch reads ASKCLVMKAE…RTDKDSEISC (73 aa). A glycan (N-linked (GlcNAc...) asparagine) is linked at N111. A glycan (N-linked (GlcNAc...) asparagine) is linked at N198. The chain crosses the membrane as a helical span at residues 266 to 288; that stretch reads AGIIAVIAVVAIAIVAGIIVLIV. Topologically, residues 289 to 314 are cytoplasmic; it reads STKKRRAKYEKAEIKEMGEMHRELNA.

The protein belongs to the EPCAM family. In terms of assembly, monomer. Interacts with phosphorylated CLDN7. In terms of processing, glycosylation at Asn-198 is crucial for protein stability.

Its subcellular location is the lateral cell membrane. It localises to the cell junction. The protein localises to the tight junction. Its function is as follows. May act as a physical homophilic interaction molecule between intestinal epithelial cells (IECs) and intraepithelial lymphocytes (IELs) at the mucosal epithelium for providing immunological barrier as a first line of defense against mucosal infection. Plays a role in embryonic stem cells proliferation and differentiation. Up-regulates the expression of FABP5, MYC and cyclins A and E. The chain is Epithelial cell adhesion molecule (TACSTD1) from Sus scrofa (Pig).